A 419-amino-acid polypeptide reads, in one-letter code: Tyrosine--tRNA ligase (419 aa).

Residue Y34 coordinates L-tyrosine. Positions 39–48 (PSGDSMHIGH) match the 'HIGH' region motif. Y168 and Q172 together coordinate L-tyrosine. The 'KMSKS' region motif lies at 230 to 234 (KFGKS). K233 is a binding site for ATP. The S4 RNA-binding domain occupies 352–418 (VNLVDWLVSL…GKKKYFLVSY (67 aa)).

It belongs to the class-I aminoacyl-tRNA synthetase family. TyrS type 1 subfamily. As to quaternary structure, homodimer.

It is found in the cytoplasm. It catalyses the reaction tRNA(Tyr) + L-tyrosine + ATP = L-tyrosyl-tRNA(Tyr) + AMP + diphosphate + H(+). In terms of biological role, catalyzes the attachment of tyrosine to tRNA(Tyr) in a two-step reaction: tyrosine is first activated by ATP to form Tyr-AMP and then transferred to the acceptor end of tRNA(Tyr). This Listeria welshimeri serovar 6b (strain ATCC 35897 / DSM 20650 / CCUG 15529 / CIP 8149 / NCTC 11857 / SLCC 5334 / V8) protein is Tyrosine--tRNA ligase.